Reading from the N-terminus, the 245-residue chain is Proteolipid protein DM alpha (245 aa).

Transmembrane regions (helical) follow at residues 19–35 (LIAT…FCGC), 71–87 (IIYG…VLLL), 117–133 (FIFL…GVFA), and 204–220 (LFIA…IALL).

This sequence belongs to the myelin proteolipid protein family. As to expression, highly expressed in white matter in myelinating shark brain.

The protein localises to the membrane. The chain is Proteolipid protein DM alpha from Squalus acanthias (Spiny dogfish).